The following is a 330-amino-acid chain: MKKSFIHQQEEISFVKNTFTQYLIAKLDVVEVQGPILSRVGDGMQDNLSGTENPVSVNVLKIPNATFEVVHSLAKWKRHTLARFGFNEGEGLVVNMKALRPDEDSLDQTHSVYVDQWDWEKVIPDGKRNLAYLKETVETIYKVIRLTELAVEARYDIEAVLPKKITFIHTEELVAKYPDLTPKERENAITKEFGAVFLIGIGGVLPDGKPHDGRAPDYDDWTTETENGYHGLNGDILVWNDQLGSAFELSSMGIRVDEEALKRQVEMTGDQDRLAFDWHKSLLNGLFPLTIGGGIGQSRMVMFLLRKKHIGEVQTSVWPQEVRDSYDNIL.

Belongs to the class-II aminoacyl-tRNA synthetase family. AsnA subfamily.

Its subcellular location is the cytoplasm. It carries out the reaction L-aspartate + NH4(+) + ATP = L-asparagine + AMP + diphosphate + H(+). It participates in amino-acid biosynthesis; L-asparagine biosynthesis; L-asparagine from L-aspartate (ammonia route): step 1/1. This chain is Aspartate--ammonia ligase, found in Streptococcus pyogenes serotype M3 (strain ATCC BAA-595 / MGAS315).